The chain runs to 305 residues: Probable pyridoxal 5'-phosphate synthase subunit pdx1 (305 aa).

Aspartate 33 is a binding site for D-ribose 5-phosphate. The active-site Schiff-base intermediate with D-ribose 5-phosphate is lysine 90. Glycine 162 provides a ligand contact to D-ribose 5-phosphate. A D-glyceraldehyde 3-phosphate-binding site is contributed by arginine 174. D-ribose 5-phosphate contacts are provided by residues glycine 223 and 244-245 (GS).

This sequence belongs to the PdxS/SNZ family. As to quaternary structure, homohexamer.

The enzyme catalyses aldehydo-D-ribose 5-phosphate + D-glyceraldehyde 3-phosphate + L-glutamine = pyridoxal 5'-phosphate + L-glutamate + phosphate + 3 H2O + H(+). It participates in cofactor biosynthesis; pyridoxal 5'-phosphate biosynthesis. Catalyzes the formation of pyridoxal 5'-phosphate from ribose 5-phosphate (RBP), glyceraldehyde 3-phosphate (G3P) and ammonia. The ammonia is provided by pdx2. Can also use ribulose 5-phosphate and dihydroxyacetone phosphate as substrates, resulting from enzyme-catalyzed isomerization of RBP and G3P, respectively. This Dictyostelium discoideum (Social amoeba) protein is Probable pyridoxal 5'-phosphate synthase subunit pdx1 (pdx1).